A 926-amino-acid chain; its full sequence is Vacuolar protein sorting-associated protein 39 homolog (926 aa).

Positions 15-306 (PVEVTCLAFQ…MTLCSGARGQ (292 aa)) constitute a CNH domain. The stretch at 590–768 (DETEMARNLN…LFRTLVHPNQ (179 aa)) is one CHCR repeat.

The protein belongs to the VAM6/VPS39 family. As to quaternary structure, probable core component of the homotypic fusion and vacuole protein sorting (HOPS) complex consisting of the core class C Vps proteins vps-11, vps-16, vps-18, and which further associates with vps-33.1, vps-39 and vps-41. May interact with lgg-2. Interacts with cuti-1.

It is found in the cytoplasm. It localises to the lysosome membrane. Its subcellular location is the late endosome membrane. The protein localises to the late endosome. The protein resides in the lysosome. Plays a role in vesicle-mediated protein trafficking to lysosomal compartments including the endocytic membrane transport and autophagic pathways. Believed to act in part as a component of the putative HOPS endosomal tethering complex which is proposed to be involved in the rab-5-to-rab-7 endosome conversion probably implicating sand-1, and via binding SNAREs and SNARE complexes to mediate tethering and docking events during SNARE-mediated membrane fusion. The HOPS complex is proposed to be recruited to rab-7 on the late endosomal membrane and to regulate late endocytic, phagocytic and autophagic traffic towards lysosomes. Involved in homotypic vesicle fusions between late endosomes and in heterotypic fusions between late endosomes and lysosomes. Required for fusion of endosomes. In association with lgg-2 mediates the tethering of autophagosomes with lysosomes to form autolysosomes. Within the HOPS complex, contributes to the normal development of gut granules in embryonic and adult intestinal cells. The chain is Vacuolar protein sorting-associated protein 39 homolog from Caenorhabditis elegans.